A 238-amino-acid polypeptide reads, in one-letter code: NADH-quinone oxidoreductase subunit I (238 aa).

2 4Fe-4S ferredoxin-type domains span residues 81-111 (LVPR…IEAG) and 123-152 (VKFV…MDSG). Residues cysteine 91, cysteine 94, cysteine 97, cysteine 101, cysteine 132, cysteine 135, cysteine 138, and cysteine 142 each coordinate [4Fe-4S] cluster.

It belongs to the complex I 23 kDa subunit family. As to quaternary structure, NDH-1 is composed of 14 different subunits. Subunits NuoA, H, J, K, L, M, N constitute the membrane sector of the complex. Requires [4Fe-4S] cluster as cofactor.

It is found in the cell inner membrane. The enzyme catalyses a quinone + NADH + 5 H(+)(in) = a quinol + NAD(+) + 4 H(+)(out). Its function is as follows. NDH-1 shuttles electrons from NADH, via FMN and iron-sulfur (Fe-S) centers, to quinones in the respiratory chain. The immediate electron acceptor for the enzyme in this species is believed to be ubiquinone. Couples the redox reaction to proton translocation (for every two electrons transferred, four hydrogen ions are translocated across the cytoplasmic membrane), and thus conserves the redox energy in a proton gradient. This chain is NADH-quinone oxidoreductase subunit I, found in Anaeromyxobacter sp. (strain Fw109-5).